The primary structure comprises 90 residues: Large ribosomal subunit protein eL37 (90 aa).

The segment at 13 to 46 (NKSHTLCNRCGRRSFHVQKKTCSSCGYPAAKMRS) adopts an A20-type zinc-finger fold. Residues Cys-19, Cys-22, Cys-34, and Cys-37 each contribute to the Zn(2+) site.

It belongs to the eukaryotic ribosomal protein eL37 family. Component of the large ribosomal subunit. Mature ribosomes consist of a small (40S) and a large (60S) subunit. The 40S subunit contains about 32 different proteins and 1 molecule of RNA (18S). The 60S subunit contains 45 different proteins and 3 molecules of RNA (25S, 5.8S and 5S). The cofactor is Zn(2+).

It is found in the cytoplasm. Its function is as follows. Component of the ribosome, a large ribonucleoprotein complex responsible for the synthesis of proteins in the cell. The small ribosomal subunit (SSU) binds messenger RNAs (mRNAs) and translates the encoded message by selecting cognate aminoacyl-transfer RNA (tRNA) molecules. The large subunit (LSU) contains the ribosomal catalytic site termed the peptidyl transferase center (PTC), which catalyzes the formation of peptide bonds, thereby polymerizing the amino acids delivered by tRNAs into a polypeptide chain. The nascent polypeptides leave the ribosome through a tunnel in the LSU and interact with protein factors that function in enzymatic processing, targeting, and the membrane insertion of nascent chains at the exit of the ribosomal tunnel. The chain is Large ribosomal subunit protein eL37 from Candida albicans (strain SC5314 / ATCC MYA-2876) (Yeast).